An 87-amino-acid chain; its full sequence is UPF0235 protein TGRD_618 (87 aa).

This sequence belongs to the UPF0235 family.

This is UPF0235 protein TGRD_618 from Endomicrobium trichonymphae.